The primary structure comprises 338 residues: Large ribosomal subunit protein uL3 (338 aa).

The disordered stretch occupies residues 230–253; that stretch reads HRKGHRRTGTIGPQAPALMFTQPR.

The protein belongs to the universal ribosomal protein uL3 family. In terms of assembly, part of the 50S ribosomal subunit. Forms a cluster with proteins L14 and L24e.

One of the primary rRNA binding proteins, it binds directly near the 3'-end of the 23S rRNA, where it nucleates assembly of the 50S subunit. The protein is Large ribosomal subunit protein uL3 of Pyrobaculum neutrophilum (strain DSM 2338 / JCM 9278 / NBRC 100436 / V24Sta) (Thermoproteus neutrophilus).